A 76-amino-acid polypeptide reads, in one-letter code: Adropin (76 aa).

Positions 1–33 are cleaved as a signal peptide; sequence MGAALSQGALIAIICNGLVGFLLLLLWVILCWA. The disordered stretch occupies residues 41–76; sequence IDSLSESSPNSSPGPCPEKAPPPQKPSHEGSYLLQP. Over residues 52 to 65 the composition is skewed to pro residues; the sequence is SPGPCPEKAPPPQK.

It localises to the secreted. In terms of biological role, involved in the regulation of glucose homeostasis and lipid metabolism. The sequence is that of Adropin (ENHO) from Bos taurus (Bovine).